A 270-amino-acid chain; its full sequence is Probable feruloyl esterase C (270 aa).

A signal peptide spans 1 to 21 (MIKSIILQAIMVLSTLTSVHG). Residue N23 is glycosylated (N-linked (GlcNAc...) asparagine).

Belongs to the faeC family.

It localises to the secreted. It carries out the reaction feruloyl-polysaccharide + H2O = ferulate + polysaccharide.. In terms of biological role, involved in degradation of plant cell walls. Hydrolyzes the feruloyl-arabinose ester bond in arabinoxylans, and the feruloyl-galactose ester bond in pectin. Active against paranitrophenyl-acetate, methyl ferulate and wheat arabinoxylan. This is Probable feruloyl esterase C (faeC) from Aspergillus oryzae (strain ATCC 42149 / RIB 40) (Yellow koji mold).